A 375-amino-acid chain; its full sequence is Methylthioribose-1-phosphate isomerase (375 aa).

The Proton donor role is filled by Asp-259.

The protein belongs to the eIF-2B alpha/beta/delta subunits family. MtnA subfamily.

The protein resides in the cytoplasm. It localises to the nucleus. The enzyme catalyses 5-(methylsulfanyl)-alpha-D-ribose 1-phosphate = 5-(methylsulfanyl)-D-ribulose 1-phosphate. Its pathway is amino-acid biosynthesis; L-methionine biosynthesis via salvage pathway; L-methionine from S-methyl-5-thio-alpha-D-ribose 1-phosphate: step 1/6. Functionally, catalyzes the interconversion of methylthioribose-1-phosphate (MTR-1-P) into methylthioribulose-1-phosphate (MTRu-1-P). The protein is Methylthioribose-1-phosphate isomerase of Populus trichocarpa (Western balsam poplar).